Here is a 1879-residue protein sequence, read N- to C-terminus: Protein TIC 214 (1879 aa).

6 helical membrane passes run 18–38, 67–87, 90–110, 127–147, 175–195, and 218–238; these read IINS…FSIG, FITG…HLAL, PHTI…WNNH, LSIQ…HFIL, VGWL…LVWI, and IFSI…PSPI. The interval 243–291 is disordered; that stretch reads LKETEERGESEEERDVEKTSETKGTKQEQEGSTEEDPSPSLFSEEKEDP. Residues 257 to 271 show a composition bias toward basic and acidic residues; that stretch reads DVEKTSETKGTKQEQ.

The protein belongs to the TIC214 family. As to quaternary structure, part of the Tic complex.

Its subcellular location is the plastid. The protein resides in the chloroplast inner membrane. In terms of biological role, involved in protein precursor import into chloroplasts. May be part of an intermediate translocation complex acting as a protein-conducting channel at the inner envelope. The polypeptide is Protein TIC 214 (Morus indica (Mulberry)).